Consider the following 485-residue polypeptide: Zinc finger protein 639 (485 aa).

A compositionally biased stretch (basic residues) spans 1–14; sequence MSEYPKKRKRKTLH. 2 disordered regions span residues 1-23 and 54-82; these read MSEYPKKRKRKTLHPSRYSDSSG and DNKDDDSDPETANDLPKFTDGTKARSRSQ. S60 is subject to Phosphoserine. K76 participates in a covalent cross-link: Glycyl lysine isopeptide (Lys-Gly) (interchain with G-Cter in SUMO2). S88 carries the phosphoserine modification. Glycyl lysine isopeptide (Lys-Gly) (interchain with G-Cter in SUMO2) cross-links involve residues K177, K181, and K226. 8 consecutive C2H2-type zinc fingers follow at residues 204–227, 233–255, 260–283, 289–311, 374–397, 403–425, 431–454, and 460–482; these read YKCELCEFNSKYFSDLKQHVILKH, NVCRVCKESFSTNMLLIEHAKLH, YICKYCDYKTVIFENLSQHIADTH, YWCEQCDVQFSSSSELYLHFQEH, FVCQVCGFRSRLHTNVNRHVAIEH, HVCDDCGKGFSSMLEYCKHLNSH, YLCQYCEYSTGQIEDLKIHLDFKH, and HKCSDCLMRFGNERELISHLPVH. An interaction with CTNNA2 region spans residues 371 to 455; it reads KNFFVCQVCG…LKIHLDFKHS (85 aa).

This sequence belongs to the krueppel C2H2-type zinc-finger protein family. Interacts with CTNNA2.

The protein resides in the nucleus. Its function is as follows. Binds DNA and may function as a transcriptional repressor. The protein is Zinc finger protein 639 (Znf639) of Rattus norvegicus (Rat).